The following is a 1170-amino-acid chain: DNA-directed RNA polymerase subunit beta (1170 aa).

Belongs to the RNA polymerase beta chain family. In terms of assembly, the RNAP catalytic core consists of 2 alpha, 1 beta, 1 beta' and 1 omega subunit. When a sigma factor is associated with the core the holoenzyme is formed, which can initiate transcription.

It carries out the reaction RNA(n) + a ribonucleoside 5'-triphosphate = RNA(n+1) + diphosphate. In terms of biological role, DNA-dependent RNA polymerase catalyzes the transcription of DNA into RNA using the four ribonucleoside triphosphates as substrates. This chain is DNA-directed RNA polymerase subunit beta, found in Corynebacterium urealyticum (strain ATCC 43042 / DSM 7109).